The primary structure comprises 222 residues: 7-cyano-7-deazaguanine synthase (222 aa).

Position 9–19 (L9–A19) interacts with ATP. The Zn(2+) site is built by C190, C198, C201, and C204.

The protein belongs to the QueC family. Zn(2+) is required as a cofactor.

The enzyme catalyses 7-carboxy-7-deazaguanine + NH4(+) + ATP = 7-cyano-7-deazaguanine + ADP + phosphate + H2O + H(+). Its pathway is purine metabolism; 7-cyano-7-deazaguanine biosynthesis. Its function is as follows. Catalyzes the ATP-dependent conversion of 7-carboxy-7-deazaguanine (CDG) to 7-cyano-7-deazaguanine (preQ(0)). The polypeptide is 7-cyano-7-deazaguanine synthase (Synechococcus sp. (strain RCC307)).